The following is a 159-amino-acid chain: Abscisic acid and environmental stress-inducible protein (159 aa).

6 consecutive repeat copies span residues 38 to 49 (GGGYNHGGGGYN), 50 to 61 (GGGYNHGGGGYN), 63 to 74 (GGGYNHGGGGYN), 77 to 88 (GGGYNHGGGGYN), 91 to 102 (GGGYNHGGGGYN), and 105 to 116 (GGGYNHGGGGYN). Residues 38-135 (GGGYNHGGGG…GYNHGGGGCQ (98 aa)) are 7 X 12 AA repeats of G-G-G-Y-N-H-G-G-G-Y-N. One copy of the 7; approximate repeat lies at 124-135 (GGGYNHGGGGCQ).

The protein belongs to the GRP family.

This Medicago sativa subsp. falcata (Sickle medic) protein is Abscisic acid and environmental stress-inducible protein.